Reading from the N-terminus, the 693-residue chain is MEQEKSLDPQLWHACAGSMVQIPSLNSTVFYFAQGHTEHAHAPPDFHAPRVPPLILCRVVSVKFLADAETDEVFAKITLLPLPGNDLDLENDAVLGLTPPSSDGNGNGKEKPASFAKTLTQSDANNGGGFSVPRYCAETIFPRLDYSAEPPVQTVIAKDIHGETWKFRHIYRGTPRRHLLTTGWSTFVNQKKLIAGDSIVFLRSESGDLCVGIRRAKRGGLGSNAGSDNPYPGFSGFLRDDESTTTTSKLMMMKRNGNNDGNAAATGRVRVEAVAEAVARAACGQAFEVVYYPRASTPEFCVKAADVRSAMRIRWCSGMRFKMAFETEDSSRISWFMGTVSAVQVADPIRWPNSPWRLLQVAWDEPDLLQNVKRVSPWLVELVSNMPTIHLSPFSPRKKIRIPQPFEFPFHGTKFPIFSPGFANNGGGESMCYLSNDNNNAPAGIQGARQAQQLFGSPSPSLLSDLNLSSYTGNNKLHSPAMFLSSFNPRHHHYQARDSENSNNISCSLTMGNPAMVQDKKKSVGSVKTHQFVLFGQPILTEQQVMNRKRFLEEEAEAEEEKGLVARGLTWNYSLQGLETGHCKVFMESEDVGRTLDLSVIGSYQELYRKLAEMFHIEERSDLLTHVVYRDANGVIKRIGDEPFSDFMKATKRLTIKMDIGGDNVRKTWITGIRTGENGIDASTKTGPLSIFA.

A DNA-binding region (TF-B3) is located at residues 115–217 (FAKTLTQSDA…DLCVGIRRAK (103 aa)). The PB1 domain maps to 580–668 (TGHCKVFMES…DIGGDNVRKT (89 aa)).

Belongs to the ARF family. In terms of assembly, homodimers and heterodimers. As to expression, expressed in the whole plant.

Its subcellular location is the nucleus. Functionally, auxin response factors (ARFs) are transcriptional factors that bind specifically to the DNA sequence 5'-TGTCTC-3' found in the auxin-responsive promoter elements (AuxREs). Could act as transcriptional activator or repressor. Formation of heterodimers with Aux/IAA proteins may alter their ability to modulate early auxin response genes expression. The polypeptide is Auxin response factor 10 (ARF10) (Arabidopsis thaliana (Mouse-ear cress)).